The chain runs to 478 residues: MARKTLRARRFFSLIFPFFFITSVYAEQTPESAKTVTVEAKNETFAPQHPDQYQSWKATSEQSAREDALAEDPRLVILWAGYPFSRDYNKPRGHAYAVTDVRETLRTGAPKTAEDGPLPMACWSCKSPDVARLIQQEGEDGYFHGKWARGGPEIVNDLGCADCHNTASDDFAQGKPALTLSRPYAERAMEAIGKPFDKAGRFDQQSMVCGQCHVEYYFDGKNKAVKFPWDEGMKVENMEQYYDAIAFSDWTNSLSKTPMLKAQHPEYETWSAGIHGKNNVTCIDCHMPKVQNAEGKLYTDHKIGNPFDNFAQTCANCHTQDKASLQKVVAERKQAIHDLKIKVEDQLVHAHFEAKAAWDAGATDAEMKPILNDIRHAQWRWDLAIASHGIHMHAPEEGLRMLGSAMDKAADARTKLARLLATKGITHEIPLPDISTKEKAQKAIGLNMQQINAEKQDFLKTVVPQWEDQARKNGLLSQ.

The N-terminal stretch at Met-1–Ala-26 is a signal peptide. His-94 contacts heme c. The heme site is built by Cys-122, Cys-125, and Lys-126. Positions 160, 163, 164, 209, 212, and 213 each coordinate heme c. Glu-215, Tyr-216, Lys-261, and Gln-263 together coordinate Ca(2+). Position 216 (Tyr-216) interacts with substrate. A substrate-binding site is contributed by His-264. Heme c-binding residues include His-275, Cys-282, Cys-285, His-286, His-301, Cys-314, Cys-317, His-318, and His-393.

Belongs to the cytochrome c-552 family. It depends on Ca(2+) as a cofactor. Requires heme c as cofactor.

Its subcellular location is the periplasm. The enzyme catalyses 6 Fe(III)-[cytochrome c] + NH4(+) + 2 H2O = 6 Fe(II)-[cytochrome c] + nitrite + 8 H(+). It participates in nitrogen metabolism; nitrate reduction (assimilation). Its function is as follows. Catalyzes the reduction of nitrite to ammonia, consuming six electrons in the process. The chain is Cytochrome c-552 from Salmonella dublin (strain CT_02021853).